The chain runs to 460 residues: DNA repair protein RAD57 (460 aa).

125–132 (GESSTGKS) provides a ligand contact to ATP.

The protein belongs to the RecA family.

It is found in the nucleus. Its function is as follows. Participates in the repair of X-ray-induced damage to DNA and in meiosis. It may act in part by stabilizing a repair complex of other RAD genes. In Saccharomyces cerevisiae (strain ATCC 204508 / S288c) (Baker's yeast), this protein is DNA repair protein RAD57 (RAD57).